Consider the following 236-residue polypeptide: Phosphoribosylaminoimidazole-succinocarboxamide synthase (236 aa).

The protein belongs to the SAICAR synthetase family.

It carries out the reaction 5-amino-1-(5-phospho-D-ribosyl)imidazole-4-carboxylate + L-aspartate + ATP = (2S)-2-[5-amino-1-(5-phospho-beta-D-ribosyl)imidazole-4-carboxamido]succinate + ADP + phosphate + 2 H(+). The protein operates within purine metabolism; IMP biosynthesis via de novo pathway; 5-amino-1-(5-phospho-D-ribosyl)imidazole-4-carboxamide from 5-amino-1-(5-phospho-D-ribosyl)imidazole-4-carboxylate: step 1/2. The protein is Phosphoribosylaminoimidazole-succinocarboxamide synthase of Pelodictyon phaeoclathratiforme (strain DSM 5477 / BU-1).